Here is a 215-residue protein sequence, read N- to C-terminus: Peptidyl-tRNA hydrolase (215 aa).

Y35 lines the tRNA pocket. Catalysis depends on H40, which acts as the Proton acceptor. TRNA is bound by residues Y86, N88, and N134.

This sequence belongs to the PTH family. In terms of assembly, monomer.

The protein resides in the cytoplasm. It carries out the reaction an N-acyl-L-alpha-aminoacyl-tRNA + H2O = an N-acyl-L-amino acid + a tRNA + H(+). Its function is as follows. Hydrolyzes ribosome-free peptidyl-tRNAs (with 1 or more amino acids incorporated), which drop off the ribosome during protein synthesis, or as a result of ribosome stalling. Functionally, catalyzes the release of premature peptidyl moieties from peptidyl-tRNA molecules trapped in stalled 50S ribosomal subunits, and thus maintains levels of free tRNAs and 50S ribosomes. In Bordetella parapertussis (strain 12822 / ATCC BAA-587 / NCTC 13253), this protein is Peptidyl-tRNA hydrolase.